Consider the following 43-residue polypeptide: Protein PsbN 2 (43 aa).

Residues 4–24 (ATILGISIAAALVGITVLALY) traverse the membrane as a helical segment.

This sequence belongs to the PsbN family.

The protein resides in the cellular thylakoid membrane. Functionally, may play a role in photosystem I and II biogenesis. This chain is Protein PsbN 2, found in Microcystis aeruginosa (strain NIES-843 / IAM M-2473).